The chain runs to 325 residues: Biotin synthase (325 aa).

One can recognise a Radical SAM core domain in the interval 42 to 270; the sequence is YKVQLASLLS…QSRVRLSAGR (229 aa). Residues C57, C61, and C64 each coordinate [4Fe-4S] cluster. [2Fe-2S] cluster is bound by residues C101, C133, C193, and R265.

Belongs to the radical SAM superfamily. Biotin synthase family. In terms of assembly, homodimer. Requires [4Fe-4S] cluster as cofactor. [2Fe-2S] cluster is required as a cofactor.

The catalysed reaction is (4R,5S)-dethiobiotin + (sulfur carrier)-SH + 2 reduced [2Fe-2S]-[ferredoxin] + 2 S-adenosyl-L-methionine = (sulfur carrier)-H + biotin + 2 5'-deoxyadenosine + 2 L-methionine + 2 oxidized [2Fe-2S]-[ferredoxin]. The protein operates within cofactor biosynthesis; biotin biosynthesis; biotin from 7,8-diaminononanoate: step 2/2. Functionally, catalyzes the conversion of dethiobiotin (DTB) to biotin by the insertion of a sulfur atom into dethiobiotin via a radical-based mechanism. This Synechococcus sp. (strain WH7803) protein is Biotin synthase.